The chain runs to 679 residues: Transketolase (679 aa).

H30 provides a ligand contact to substrate. Thiamine diphosphate is bound by residues H69 and 116-118 (GPL). D157 contacts Mg(2+). Thiamine diphosphate-binding residues include G158 and N187. Residues N187 and I189 each coordinate Mg(2+). The substrate site is built by H262, R358, and S385. H262 contacts thiamine diphosphate. Thiamine diphosphate-binding residues include E417 and F444. E417 serves as the catalytic Proton donor. Substrate contacts are provided by H468, D476, and R527.

The protein belongs to the transketolase family. In terms of assembly, homodimer. It depends on Mg(2+) as a cofactor. The cofactor is Ca(2+). Mn(2+) serves as cofactor. Requires Co(2+) as cofactor. Thiamine diphosphate is required as a cofactor.

The catalysed reaction is D-sedoheptulose 7-phosphate + D-glyceraldehyde 3-phosphate = aldehydo-D-ribose 5-phosphate + D-xylulose 5-phosphate. Catalyzes the transfer of a two-carbon ketol group from a ketose donor to an aldose acceptor, via a covalent intermediate with the cofactor thiamine pyrophosphate. In Kluyveromyces lactis (strain ATCC 8585 / CBS 2359 / DSM 70799 / NBRC 1267 / NRRL Y-1140 / WM37) (Yeast), this protein is Transketolase (TKL1).